The primary structure comprises 289 residues: Acetyl-coenzyme A carboxylase carboxyl transferase subunit beta (289 aa).

A CoA carboxyltransferase N-terminal domain is found at 24 to 289 (LWIKCPESGE…NSPRRAPIPA (266 aa)).

The protein belongs to the AccD/PCCB family. As to quaternary structure, acetyl-CoA carboxylase is a heterohexamer composed of biotin carboxyl carrier protein (AccB), biotin carboxylase (AccC) and two subunits each of ACCase subunit alpha (AccA) and ACCase subunit beta (AccD).

It localises to the cytoplasm. It catalyses the reaction N(6)-carboxybiotinyl-L-lysyl-[protein] + acetyl-CoA = N(6)-biotinyl-L-lysyl-[protein] + malonyl-CoA. The protein operates within lipid metabolism; malonyl-CoA biosynthesis; malonyl-CoA from acetyl-CoA: step 1/1. Component of the acetyl coenzyme A carboxylase (ACC) complex. Biotin carboxylase (BC) catalyzes the carboxylation of biotin on its carrier protein (BCCP) and then the CO(2) group is transferred by the transcarboxylase to acetyl-CoA to form malonyl-CoA. The chain is Acetyl-coenzyme A carboxylase carboxyl transferase subunit beta from Beijerinckia indica subsp. indica (strain ATCC 9039 / DSM 1715 / NCIMB 8712).